The following is a 320-amino-acid chain: Polyisoprenyl-teichoic acid--peptidoglycan teichoic acid transferase TagU (320 aa).

The Cytoplasmic segment spans residues 1–15; that stretch reads MVSRTERKQHKKRRK. Residues 16 to 36 traverse the membrane as a helical; Signal-anchor for type II membrane protein segment; it reads WPFWLGGILLVLLLLISGGIF. At 37-320 the chain is on the extracellular side; it reads LIYNQVGAVV…SEITGHMQEQ (284 aa).

Belongs to the LytR/CpsA/Psr (LCP) family.

It is found in the cell membrane. It functions in the pathway cell wall biogenesis. In terms of biological role, may catalyze the final step in cell wall teichoic acid biosynthesis, the transfer of the anionic cell wall polymers (APs) from their lipid-linked precursor to the cell wall peptidoglycan (PG). The sequence is that of Polyisoprenyl-teichoic acid--peptidoglycan teichoic acid transferase TagU from Oceanobacillus iheyensis (strain DSM 14371 / CIP 107618 / JCM 11309 / KCTC 3954 / HTE831).